The primary structure comprises 469 residues: MAKTLYQKLFDAHVVYEAEGETPILYINRHLIHEVTSPQAFDGLRVAGRQVRQVSKTFGTMDHSISTQVRDVNKLEGQAKIQVLELDKNCKATGISLFDMNTKEQGIVHVMGPEQGLTLPGMTIVCGDSHTATHGAFGALAFGIGTSEVEHVLATQTLKQARAKSMKVEVRGKVNPGITAKDIVLAIIGKTTMAGGTGHVVEFCGEAIRDLSMEGRMTVCNMAIEFGAKAGLVAPDETTFEYLKGRPHAPKGKDWDDAVAYWKTLKSDEDAQFDTVVVLEAKDIAPQVTWGTNPGQVIGIDQLVPNPAEMTDPVTKASAEKALAYIGLEPNTDLKNVPVDQVFIGSCTNSRIEDLRAAAAVMKGRKKADNVKRVLVVPGSGLVKEQAEKEGLDKIFLAAGAEWRNPGCSMCLGMNDDRLGEWERCASTSNRNFEGRQGRNGRTHLVSPAMAAAAAVFGKFVDIRNVSLN.

Cys-347, Cys-408, and Cys-411 together coordinate [4Fe-4S] cluster.

The protein belongs to the aconitase/IPM isomerase family. LeuC type 1 subfamily. Heterodimer of LeuC and LeuD. [4Fe-4S] cluster serves as cofactor.

The enzyme catalyses (2R,3S)-3-isopropylmalate = (2S)-2-isopropylmalate. It participates in amino-acid biosynthesis; L-leucine biosynthesis; L-leucine from 3-methyl-2-oxobutanoate: step 2/4. Functionally, catalyzes the isomerization between 2-isopropylmalate and 3-isopropylmalate, via the formation of 2-isopropylmaleate. The polypeptide is 3-isopropylmalate dehydratase large subunit 2 (Mannheimia succiniciproducens (strain KCTC 0769BP / MBEL55E)).